A 412-amino-acid polypeptide reads, in one-letter code: Circumsporozoite protein (412 aa).

The first 18 residues, 1 to 18 (MMRKLAILSVSSFLFVEA), serve as a signal peptide directing secretion. The tract at residues 69 to 328 (SRSLGENDDG…KNNNNEEPSD (260 aa)) is disordered. Positions 85-105 (NGREGKDEDKRDGNNEDNEKL) are enriched in basic and acidic residues. Positions 104–111 (KLRKPKHK) are required for the binding to heparan sulfate proteoglycans (HSPGs) on the surface of host hepatocytes. The tract at residues 112-116 (KLKQP) is region I; contains the proteolytic cleavage site. Positions 120 to 288 (NPDPNANPNV…PNANPNANPN (169 aa)) are enriched in low complexity. 41 repeat units span residues 123 to 126 (PNAN), 127 to 130 (PNVD), 131 to 134 (PNAN), 135 to 138 (PNVD), 139 to 142 (PNAN), 143 to 146 (PNVD), 147 to 150 (PNAN), 151 to 154 (PNAN), 155 to 158 (PNAN), 159 to 162 (PNAN), 163 to 166 (PNAN), 167 to 170 (PNAN), 171 to 174 (PNAN), 175 to 178 (PNAN), 179 to 182 (PNAN), 183 to 186 (PNAN), 187 to 190 (PNAN), 191 to 194 (PNAN), 195 to 198 (PNAN), 199 to 202 (PNAN), 203 to 206 (PNAN), 207 to 210 (PNVD), 211 to 214 (PNAN), 215 to 218 (PNAN), 219 to 222 (PNAN), 223 to 226 (PNAN), 227 to 230 (PNAN), 231 to 234 (PNAN), 235 to 238 (PNAN), 239 to 242 (PNAN), 243 to 246 (PNAN), 247 to 250 (PNAN), 251 to 254 (PNAN), 255 to 258 (PNAN), 259 to 262 (PNAN), 263 to 266 (PNAN), 267 to 270 (PNAN), 271 to 274 (PNAN), 275 to 278 (PNAN), 279 to 282 (PNAN), and 283 to 286 (PNAN). The interval 123–286 (PNANPNVDPN…ANPNANPNAN (164 aa)) is 41 X 4 AA tandem repeats of P-N-[AV]-[ND]. Over residues 289–304 (KNNQGNGQGHNMPNDP) the composition is skewed to polar residues. Low complexity predominate over residues 310–324 (ENANANNAVKNNNNE). One can recognise a TSP type-1 domain in the interval 337–390 (KIKNSISTEWSPCSVTCGNGIQVRIKPGSANKPKDELDYENDIEKKICKMEKCS). 2 disulfides stabilise this stretch: cysteine 349-cysteine 384 and cysteine 353-cysteine 389. O-linked (Fuc) threonine glycosylation occurs at threonine 352. A lipid anchor (GPI-anchor amidated cysteine) is attached at cysteine 389. Residues 390-412 (SSVFNVVNSSIGLIMVLSFLFLN) constitute a propeptide, removed in mature form.

The protein belongs to the plasmodium circumsporozoite protein family. Post-translationally, during host cell invasion, proteolytically cleaved at the cell membrane in the region I by a papain-like cysteine protease of parasite origin. Cleavage is triggered by the sporozoite contact with highly sulfated heparan sulfate proteoglycans (HSPGs) present on the host hepatocyte cell surface. Cleavage exposes the TSP type-1 (TSR) domain and is required for productive invasion of host hepatocytes but not for adhesion to the host cell membrane. Cleavage is dispensable for sporozoite development in the oocyst, motility and for traversal of host and vector cells. O-glycosylated; maybe by POFUT2.

It localises to the cell membrane. The protein localises to the cytoplasm. Essential sporozoite protein. In the mosquito vector, required for sporozoite development in the oocyst, migration through the vector hemolymph and entry into the vector salivary glands. In the vertebrate host, required for sporozoite migration through the host dermis and infection of host hepatocytes. Binds to highly sulfated heparan sulfate proteoglycans (HSPGs) on the surface of host hepatocytes. Its function is as follows. In the vertebrate host, binds to highly sulfated heparan sulfate proteoglycans (HSPGs) on the surface of host hepatocytes and is required for sporozoite invasion of the host hepatocytes. In Plasmodium falciparum, this protein is Circumsporozoite protein.